The primary structure comprises 351 residues: Glycerol-3-phosphate dehydrogenase 1-like protein (351 aa).

An NAD(+)-binding site is contributed by 12–17 (GSGNWG). Residue Lys-122 participates in substrate binding. NAD(+) is bound at residue Ala-155. Lys-206 serves as the catalytic Proton acceptor. Positions 271, 298, and 300 each coordinate NAD(+). Position 271 to 272 (271 to 272 (RN)) interacts with substrate.

This sequence belongs to the NAD-dependent glycerol-3-phosphate dehydrogenase family. Interacts with SCN5A. As to expression, most highly expressed in heart tissue, with lower levels in the skeletal muscle, kidney, lung and other organs.

The protein resides in the cytoplasm. It carries out the reaction sn-glycerol 3-phosphate + NAD(+) = dihydroxyacetone phosphate + NADH + H(+). In terms of biological role, plays a role in regulating cardiac sodium current; decreased enzymatic activity with resulting increased levels of glycerol 3-phosphate activating the DPD1L-dependent SCN5A phosphorylation pathway, may ultimately lead to decreased sodium current; cardiac sodium current may also be reduced due to alterations of NAD(H) balance induced by DPD1L. The sequence is that of Glycerol-3-phosphate dehydrogenase 1-like protein from Homo sapiens (Human).